A 363-amino-acid chain; its full sequence is Trichocyst matrix protein T4-A (363 aa).

A signal peptide spans 1–17 (MARSLTILAIVFAVATA). A propeptide spanning residues 18 to 52 (RVTKSESPKEILAQVNKDSFGNSILSVLQLQLATG) is cleaved from the precursor. A coiled-coil region spans residues 85–119 (VAFEKIIADLEQEIAYHQTQIVALSNLRDSTTEAL). A propeptide spanning residues 190–221 (RFEKVQAKLMESKHALFKPLINALTQLASKVD) is cleaved from the precursor. Residues 244 to 352 (ASLLATEERQ…EVLTQKLSAA (109 aa)) adopt a coiled-coil conformation.

It belongs to the TMP family. In terms of processing, two components are produced by post-translational processing from the precursor peptide.

Its subcellular location is the trichocyst. Structural protein that crystallize inside the trichocyst matrix. This Paramecium tetraurelia protein is Trichocyst matrix protein T4-A (T4A).